The chain runs to 573 residues: Protein FAM200A (573 aa).

The tract at residues 1–51 (MTPESRDTTDLSPGGTQEMEGIVIVKVEEEDEEDHFQKERNKVESSPQVLS) is disordered. Over 1-513 (MTPESRDTTD…DDFPLLSRKS (513 aa)) the chain is Extracellular. Residues 514 to 533 (ILLLLPFTTTYLCELGFSIL) traverse the membrane as a helical segment. Residues 534–573 (TRLKTKKRNRLNSAPDMRVALSSCVPDWKELMNRQAHPSH) are Cytoplasmic-facing.

The protein belongs to the FAM200 family.

The protein localises to the membrane. This Homo sapiens (Human) protein is Protein FAM200A (FAM200A).